A 278-amino-acid polypeptide reads, in one-letter code: Elongation factor Ts 2, mitochondrial (278 aa).

Belongs to the EF-Ts family.

The protein localises to the mitochondrion. Associates with the EF-Tu.GDP complex and induces the exchange of GDP to GTP. It remains bound to the aminoacyl-tRNA.EF-Tu.GTP complex up to the GTP hydrolysis stage on the ribosome. This chain is Elongation factor Ts 2, mitochondrial, found in Trypanosoma cruzi (strain CL Brener).